We begin with the raw amino-acid sequence, 308 residues long: Aspartate carbamoyltransferase catalytic subunit (308 aa).

Carbamoyl phosphate-binding residues include Arg-57 and Thr-58. Lys-86 is an L-aspartate binding site. Carbamoyl phosphate contacts are provided by Arg-107, His-135, and Gln-138. The L-aspartate site is built by Arg-168 and Arg-228. Residues Leu-267 and Pro-268 each contribute to the carbamoyl phosphate site.

It belongs to the aspartate/ornithine carbamoyltransferase superfamily. ATCase family. Heterododecamer (2C3:3R2) of six catalytic PyrB chains organized as two trimers (C3), and six regulatory PyrI chains organized as three dimers (R2).

It catalyses the reaction carbamoyl phosphate + L-aspartate = N-carbamoyl-L-aspartate + phosphate + H(+). It functions in the pathway pyrimidine metabolism; UMP biosynthesis via de novo pathway; (S)-dihydroorotate from bicarbonate: step 2/3. Functionally, catalyzes the condensation of carbamoyl phosphate and aspartate to form carbamoyl aspartate and inorganic phosphate, the committed step in the de novo pyrimidine nucleotide biosynthesis pathway. This is Aspartate carbamoyltransferase catalytic subunit from Leptospira interrogans serogroup Icterohaemorrhagiae serovar Lai (strain 56601).